The primary structure comprises 275 residues: NH(3)-dependent NAD(+) synthetase (275 aa).

Position 46–53 (46–53) interacts with ATP; the sequence is GISGGQDS. Aspartate 52 lines the Mg(2+) pocket. Arginine 140 contacts deamido-NAD(+). Position 160 (threonine 160) interacts with ATP. Glutamate 165 is a binding site for Mg(2+). Deamido-NAD(+)-binding residues include lysine 173 and aspartate 180. Lysine 189 and threonine 211 together coordinate ATP. Residue 260–261 participates in deamido-NAD(+) binding; it reads HK.

The protein belongs to the NAD synthetase family. As to quaternary structure, homodimer.

The enzyme catalyses deamido-NAD(+) + NH4(+) + ATP = AMP + diphosphate + NAD(+) + H(+). Its pathway is cofactor biosynthesis; NAD(+) biosynthesis; NAD(+) from deamido-NAD(+) (ammonia route): step 1/1. Its function is as follows. Catalyzes the ATP-dependent amidation of deamido-NAD to form NAD. Uses ammonia as a nitrogen source. In Salmonella typhi, this protein is NH(3)-dependent NAD(+) synthetase.